We begin with the raw amino-acid sequence, 120 residues long: Large ribosomal subunit protein uL18 (120 aa).

Belongs to the universal ribosomal protein uL18 family. In terms of assembly, part of the 50S ribosomal subunit; part of the 5S rRNA/L5/L18/L25 subcomplex. Contacts the 5S and 23S rRNAs.

This is one of the proteins that bind and probably mediate the attachment of the 5S RNA into the large ribosomal subunit, where it forms part of the central protuberance. The protein is Large ribosomal subunit protein uL18 of Lawsonia intracellularis (strain PHE/MN1-00).